Here is a 422-residue protein sequence, read N- to C-terminus: Cell division protein DivIB (422 aa).

2 stretches are compositionally biased toward basic and acidic residues: residues 1–23 (MVDW…KQEE) and 62–75 (EEAK…DQEQ). The disordered stretch occupies residues 1 to 77 (MVDWDKEAQR…DFAKDQEQKH (77 aa)). Residues 1-109 (MVDWDKEAQR…LQLKSVSWSR (109 aa)) lie on the Cytoplasmic side of the membrane. A helical transmembrane segment spans residues 110 to 130 (LILAAAFLFMIIFSAFWLSPL). The region spanning 131–202 (NRIATIEVSG…RTVEVNVQEF (72 aa)) is the POTRA domain. Topologically, residues 131–422 (NRIATIEVSG…TVTQTRSSNS (292 aa)) are extracellular. The interval 329-422 (NPLNDPFASP…TVTQTRSSNS (94 aa)) is disordered. The span at 338–379 (PEEKASYQEKVDQAKEKSKEKQAKADKHSSESKLGDKPKPRG) shows a compositional bias: basic and acidic residues. Low complexity predominate over residues 389 to 422 (TSSQRQTSSQSSPRPGTNSSQQSSTVTQTRSSNS).

Belongs to the FtsQ/DivIB family. DivIB subfamily.

Its subcellular location is the cell membrane. Cell division protein that may be involved in stabilizing or promoting the assembly of the division complex. This is Cell division protein DivIB from Aerococcus urinae (strain CCUG 59500 / ACS-120-V-Col10a).